Reading from the N-terminus, the 211-residue chain is MVNCIIKNWQGEEVGQATLELKVAKEENAAHIVHRALVRQQTNARQGTASTKTRAEVRGGGRKPWRQKGTGRARAGSIRSPLWRGGGVTFGPKPKDFNVKMNRKERRLALRTALDSRIEDLIVVENFAEQLTQPKTKELVSALTRWGIDGNQKVVLIVSEITDNIQLSARNVPYIKLLKADGLNVYDLLVADKIVATAEALSKVQEVYSDS.

The span at 41–52 shows a compositional bias: polar residues; sequence QTNARQGTASTK. Residues 41 to 78 form a disordered region; the sequence is QTNARQGTASTKTRAEVRGGGRKPWRQKGTGRARAGSI. A compositionally biased stretch (basic residues) spans 60 to 71; the sequence is GGRKPWRQKGTG.

It belongs to the universal ribosomal protein uL4 family. As to quaternary structure, part of the 50S ribosomal subunit.

In terms of biological role, one of the primary rRNA binding proteins, this protein initially binds near the 5'-end of the 23S rRNA. It is important during the early stages of 50S assembly. It makes multiple contacts with different domains of the 23S rRNA in the assembled 50S subunit and ribosome. Functionally, forms part of the polypeptide exit tunnel. The protein is Large ribosomal subunit protein uL4 of Rippkaea orientalis (strain PCC 8801 / RF-1) (Cyanothece sp. (strain PCC 8801)).